The sequence spans 363 residues: Alanine racemase (363 aa).

K34 (proton acceptor; specific for D-alanine) is an active-site residue. K34 carries the N6-(pyridoxal phosphate)lysine modification. R129 provides a ligand contact to substrate. Y256 acts as the Proton acceptor; specific for L-alanine in catalysis. M304 is a binding site for substrate.

The protein belongs to the alanine racemase family. The cofactor is pyridoxal 5'-phosphate.

It carries out the reaction L-alanine = D-alanine. Its pathway is amino-acid biosynthesis; D-alanine biosynthesis; D-alanine from L-alanine: step 1/1. In terms of biological role, catalyzes the interconversion of L-alanine and D-alanine. May also act on other amino acids. The protein is Alanine racemase (alr) of Edwardsiella ictaluri (strain 93-146).